A 130-amino-acid polypeptide reads, in one-letter code: Small ribosomal subunit protein uS11c (130 aa).

This sequence belongs to the universal ribosomal protein uS11 family. Part of the 30S ribosomal subunit.

It is found in the plastid. The protein resides in the chloroplast. The chain is Small ribosomal subunit protein uS11c from Drimys granadensis.